Consider the following 815-residue polypeptide: uncharacterized protein (815 aa).

The N-terminal stretch at 1-25 is a signal peptide; that stretch reads MVVMKKKRILIVSAIVLLFLTVASA. 6 consecutive transmembrane segments (helical) span residues 127-147, 157-177, 311-331, 333-353, 372-392, and 401-421; these read FGEA…CVRG, ILFI…GYYM, SFIA…LAFF, FLLQ…FILA, VYLL…TCFI, and GFGM…IGFH. Residues 483 to 815 are disordered; it reads KDGSNADGVT…DRLRRDERTR (333 aa). A compositionally biased stretch (polar residues) spans 513–543; that stretch reads HAISRTPQKETANGIANHNSRSLKRNPQTLS. Basic and acidic residues-rich tracts occupy residues 544 to 563 and 599 to 614; these read KEQE…ENKQ and QDKK…KEYV. Residues 619 to 630 are compositionally biased toward polar residues; it reads KQPNNQQQTDDA. A compositionally biased stretch (basic and acidic residues) spans 648–658; the sequence is ENEKDTERTDQ. The segment covering 665 to 678 has biased composition (polar residues); it reads EQNQNLETDQQQDF. Residues 696–705 show a composition bias toward basic and acidic residues; that stretch reads KTAEIKRSDQ. Over residues 720 to 732 the composition is skewed to polar residues; it reads SPQSTKVENQPIA. Residues 734-757 show a composition bias toward basic and acidic residues; that stretch reads NERKIRPSEPAKVHSDGIRVDEKQ. A compositionally biased stretch (polar residues) spans 773–793; the sequence is PSSQTIKRTEQSVNSFDQVSL. Residues 796 to 815 show a composition bias toward basic and acidic residues; it reads IARRSSSKVEDRLRRDERTR.

It is found in the cell membrane. This is an uncharacterized protein from Bacillus subtilis (strain 168).